The following is a 162-amino-acid chain: MAKSNYITRAGWQALDQELKYLWKEERPKVTQSVSEAAALGDRSENAEYIYGKRRLREIDRRIRFLSKRLEALQIIDYHPQQAGKVFFGAWIELENNEGEINQYRIVGCDEFDPTKNWISIDSPVARALIGKCVDDEIEVQTPTGKAVFYINKIWYDTKSLY.

Positions 52 to 76 (GKRRLREIDRRIRFLSKRLEALQII) form a coiled coil.

It belongs to the GreA/GreB family. GreB subfamily.

Its function is as follows. Necessary for efficient RNA polymerase transcription elongation past template-encoded arresting sites. The arresting sites in DNA have the property of trapping a certain fraction of elongating RNA polymerases that pass through, resulting in locked ternary complexes. Cleavage of the nascent transcript by cleavage factors such as GreA or GreB allows the resumption of elongation from the new 3'terminus. GreB releases sequences of up to 9 nucleotides in length. The protein is Transcription elongation factor GreB of Haemophilus ducreyi (strain 35000HP / ATCC 700724).